A 610-amino-acid chain; its full sequence is 6(G)-fructosyltransferase (610 aa).

The Cytoplasmic portion of the chain corresponds to 1–20 (MATSLQAPILGSRPPRRTLR). The chain crosses the membrane as a helical; Signal-anchor for type II membrane protein span at residues 21–38 (FLSFALFSALVLVVASFS). At 39–610 (SRKSESGSGL…NQYYPFTSSN (572 aa)) the chain is on the vacuolar side. Substrate-binding positions include 79–82 (YMND), Gln98, Trp106, 141–142 (WT), and 207–208 (RD). Asp82 is a catalytic residue. Residues Asn215, Asn229, and Asn248 are each glycosylated (N-linked (GlcNAc...) asparagine). Glu266 contacts substrate. Asn459 carries N-linked (GlcNAc...) asparagine glycosylation. A disulfide bond links Cys460 and Cys508. Asn580 and Asn597 each carry an N-linked (GlcNAc...) asparagine glycan.

Belongs to the glycosyl hydrolase 32 family. In terms of processing, might be processed in two N-terminal and C-terminal proteolytic fragments.

It localises to the vacuole membrane. The enzyme catalyses [1-beta-D-fructofuranosyl-(2-&gt;1)-]m+1 alpha-D-glucopyranoside + [1-beta-D-fructofuranosyl-(2-&gt;1)-]n+1 alpha-D-glucopyranoside = [1-beta-D-fructofuranosyl-(2-&gt;1)-]m alpha-D-glucopyranoside + [1-beta-D-fructofuranosyl-(2-&gt;1)-]n+1 beta-D-fructofuranosyl-(2-&gt;6)-alpha-D-glucopyranoside (m &gt; 0, n &gt;= 0).. In terms of biological role, involved in the synthesis of fructan of the inulin neoseries. Has no 1-FFT activity. The polypeptide is 6(G)-fructosyltransferase (FT1) (Asparagus officinalis (Garden asparagus)).